We begin with the raw amino-acid sequence, 168 residues long: N-alpha-acetyltransferase 50 (168 aa).

The region spanning 5–154 (IELGDVTPHN…DAHVLQKSLR (150 aa)) is the N-acetyltransferase domain. Tyrosine 30 provides a ligand contact to substrate. Residue tyrosine 72 is part of the active site. Methionine 74 serves as a coordination point for substrate. Acetyl-CoA is bound at residue 76-89 (LGCLAPYRRLGIGT). Histidine 111 is an active-site residue. Position 116–125 (116–125 (NESAIDFYQK)) interacts with CoA. Residues 137–140 (YYKR) form a substrate region.

The protein belongs to the acetyltransferase family. GNAT subfamily. In terms of assembly, interacts with naa35.

Its subcellular location is the cytoplasm. The protein resides in the nucleus. The enzyme catalyses N-terminal L-methionyl-L-alanyl-[protein] + acetyl-CoA = N-terminal N(alpha)-acetyl-L-methionyl-L-alanyl-[protein] + CoA + H(+). It catalyses the reaction N-terminal L-methionyl-L-seryl-[protein] + acetyl-CoA = N-terminal N(alpha)-acetyl-L-methionyl-L-seryl-[protein] + CoA + H(+). The catalysed reaction is N-terminal L-methionyl-L-valyl-[protein] + acetyl-CoA = N-terminal N(alpha)-acetyl-L-methionyl-L-valyl-[protein] + CoA + H(+). It carries out the reaction N-terminal L-methionyl-L-threonyl-[protein] + acetyl-CoA = N-terminal N(alpha)-acetyl-L-methionyl-L-threonyl-[protein] + CoA + H(+). The enzyme catalyses N-terminal L-methionyl-L-lysyl-[protein] + acetyl-CoA = N-terminal N(alpha)-acetyl-L-methionyl-L-lysyl-[protein] + CoA + H(+). It catalyses the reaction N-terminal L-methionyl-L-leucyl-[protein] + acetyl-CoA = N-terminal N(alpha)-acetyl-L-methionyl-L-leucyl-[protein] + CoA + H(+). The catalysed reaction is N-terminal L-methionyl-L-phenylalanyl-[protein] + acetyl-CoA = N-terminal N(alpha)-acetyl-L-methionyl-L-phenylalanyl-[protein] + CoA + H(+). It carries out the reaction N-terminal L-methionyl-L-tyrosyl-[protein] + acetyl-CoA = N-terminal N(alpha)-acetyl-L-methionyl-L-tyrosyl-[protein] + CoA + H(+). In terms of biological role, N-alpha-acetyltransferase that acetylates the N-terminus of proteins that retain their initiating methionine. Has a broad substrate specificity: able to acetylate the initiator methionine of most peptides, except for those with a proline in second position. Also displays N-epsilon-acetyltransferase activity by mediating acetylation of the side chain of specific lysines on proteins. The relevance of N-epsilon-acetyltransferase activity is however unclear. Required for sister chromatid cohesion during mitosis by promoting binding of CDCA5/sororin to cohesin. Essential in embryonic cell proliferation and survival. The protein is N-alpha-acetyltransferase 50 (naa50) of Danio rerio (Zebrafish).